The primary structure comprises 960 residues: Dynamin-like GTPase OPA1, mitochondrial (960 aa).

A mitochondrion-targeting transit peptide spans 1 to 87; sequence MWRLRRAAVA…IKYGYQPRRN (87 aa). At 88 to 96 the chain is on the mitochondrial matrix side; it reads FWPARLATR. A helical transmembrane segment spans residues 97 to 113; that stretch reads LLKLRYLILGSAVGGGY. Over 114-770 the chain is Mitochondrial intermembrane; the sequence is TAKKTFDQWK…NAIENMVGPD (657 aa). The stretch at 210–254 forms a coiled coil; sequence SDKEKIDQLQEELLHTQLKYQRILERLEKENKELRKLVLQKDDKG. K228 carries the post-translational modification N6-acetyllysine. The Dynamin-type G domain occupies 285–561; that stretch reads QDHLPRVVVV…FWKMVRESVE (277 aa). Residues 295–302 are G1 motif; it reads GDQSAGKT. GTP contacts are provided by S298, G300, K301, T302, S303, and G317. Position 302 (T302) interacts with Mg(2+). The interval 321-324 is G2 motif; that stretch reads MMTR. Mg(2+) is bound by residues T323 and D398. The tract at residues 398 to 401 is G3 motif; it reads DLPG. The G4 motif stretch occupies residues 467–470; sequence TKVD. The GTP site is built by K468, D470, and T503. Residues 501-504 form a G5 motif region; the sequence is VVTG. Stalk region stretches follow at residues 589-836 and 874-928; these read DRNE…IKDT and CNDV…IKLL. The tract at residues 736–856 is paddle region; sequence SDKQQWDAAI…KTALNHCNLC (121 aa). An intramembrane segment occupies 771-781; it reads WKKRWLYWKNR. Over 782–960 the chain is Mitochondrial intermembrane; that stretch reads TQEQCVHNET…AFIEALHQEK (179 aa). A disulfide bridge connects residues C856 and C874. Residues 895–960 adopt a coiled-coil conformation; it reads RQQLTNTEVR…AFIEALHQEK (66 aa).

The protein belongs to the TRAFAC class dynamin-like GTPase superfamily. Dynamin/Fzo/YdjA family. Oligomeric complex consisting of membrane-bound and soluble forms of OPA1. Interacts with RCC1L; RCC1L acts as a guanine nucleotide exchange factor (GEF) for OPA1 by exchanging bound GDP for free GTP. Interacts with CHCHD3 and IMMT; these interactions occur preferentially with soluble OPA1 forms. Interacts with PRELID1. Post-translationally, cleaved by OMA1 or YME1L downstream of the transmembrane region in response to different signals to generate soluble forms. Cleaved by OMA1 at position S1 following stress conditions, generating the short soluble form (Dynamin-like GTPase OPA1, short form; S-OPA1). AFG3L2 is involved in the regulation of OMA1-dependent processing of OPA1. PARL-dependent proteolytic processing releases an antiapoptotic soluble form not required for mitochondrial fusion.

The protein localises to the mitochondrion inner membrane. It localises to the mitochondrion intermembrane space. It carries out the reaction GTP + H2O = GDP + phosphate + H(+). Activated by guanine nucleotide exchange factor RCC1L. Its function is as follows. Dynamin-related GTPase that is essential for normal mitochondrial morphology by mediating fusion of the mitochondrial inner membranes, regulating cristae morphology and maintaining respiratory chain function. Exists in two forms: the transmembrane, long form (Dynamin-like GTPase OPA1, long form; L-OPA1), which is tethered to the inner mitochondrial membrane, and the short soluble form (Dynamin-like GTPase OPA1, short form; S-OPA1), which results from proteolytic cleavage and localizes in the intermembrane space. Both forms (L-OPA1 and S-OPA1) cooperate to catalyze the fusion of the mitochondrial inner membrane. The equilibrium between L-OPA1 and S-OPA1 is essential: excess levels of S-OPA1, produced by cleavage by OMA1 following loss of mitochondrial membrane potential, lead to an impaired equilibrium between L-OPA1 and S-OPA1, inhibiting mitochondrial fusion. The balance between L-OPA1 and S-OPA1 also influences cristae shape and morphology. Involved in remodeling cristae and the release of cytochrome c during apoptosis. Proteolytic processing by PARL in response to intrinsic apoptotic signals may lead to disassembly of OPA1 oligomers and release of the caspase activator cytochrome C (CYCS) into the mitochondrial intermembrane space. Acts as a regulator of T-helper Th17 cells, which are characterized by cells with fused mitochondria with tight cristae, by mediating mitochondrial membrane remodeling: OPA1 is required for interleukin-17 (IL-17) production. Its role in mitochondrial morphology is required for mitochondrial genome maintenance. In terms of biological role, constitutes the transmembrane long form (L-OPA1) that plays a central role in mitochondrial inner membrane fusion and cristae morphology. L-OPA1 and the soluble short form (S-OPA1) form higher-order helical assemblies that coordinate the fusion of mitochondrial inner membranes. Inner membrane-anchored L-OPA1 molecules initiate membrane remodeling by recruiting soluble S-OPA1 to rapidly polymerize into a flexible cylindrical scaffold encaging the mitochondrial inner membrane. Once at the membrane surface, the formation of S-OPA1 helices induce bilayer curvature. OPA1 dimerization through the paddle region, which inserts into cardiolipin-containing membrane, promotes GTP hydrolysis and the helical assembly of a flexible OPA1 lattice on the membrane, which drives membrane curvature and mitochondrial fusion. Plays a role in the maintenance and remodeling of mitochondrial cristae, some invaginations of the mitochondrial inner membrane that provide an increase in the surface area. Probably acts by forming helical filaments at the inside of inner membrane tubes with the shape and dimensions of crista junctions. The equilibrium between L-OPA1 and S-OPA1 influences cristae shape and morphology: increased L-OPA1 levels promote cristae stacking and elongated mitochondria, while increased S-OPA1 levels correlated with irregular cristae packing and round mitochondria shape. Constitutes the soluble short form (S-OPA1) generated by cleavage by OMA1, which plays a central role in mitochondrial inner membrane fusion and cristae morphology. The transmembrane long form (L-OPA1) and the S-OPA1 form higher-order helical assemblies that coordinate the fusion of mitochondrial inner membranes. Inner membrane-anchored L-OPA1 molecules initiate membrane remodeling by recruiting soluble S-OPA1 to rapidly polymerize into a flexible cylindrical scaffold encaging the mitochondrial inner membrane. Once at the membrane surface, the formation of S-OPA1 helices induce bilayer curvature. OPA1 dimerization through the paddle region, which inserts into cardiolipin-containing membrane, promotes GTP hydrolysis and the helical assembly of a flexible OPA1 lattice on the membrane, which drives membrane curvature and mitochondrial fusion. Excess levels of S-OPA1 produced by cleavage by OMA1 following stress conditions that induce loss of mitochondrial membrane potential, lead to an impaired equilibrium between L-OPA1 and S-OPA1, thereby inhibiting mitochondrial fusion. Involved in mitochondrial safeguard in response to transient mitochondrial membrane depolarization by mediating flickering: cleavage by OMA1 leads to excess production of S-OPA1, preventing mitochondrial hyperfusion. Plays a role in the maintenance and remodeling of mitochondrial cristae, some invaginations of the mitochondrial inner membrane that provide an increase in the surface area. Probably acts by forming helical filaments at the inside of inner membrane tubes with the shape and dimensions of crista junctions. The equilibrium between L-OPA1 and S-OPA1 influences cristae shape and morphology: increased L-OPA1 levels promote cristae stacking and elongated mitochondria, while increased S-OPA1 levels correlated with irregular cristae packing and round mitochondria shape. This Pongo abelii (Sumatran orangutan) protein is Dynamin-like GTPase OPA1, mitochondrial.